Here is a 283-residue protein sequence, read N- to C-terminus: MAGAGLVTIKRRIKSITSTQKITKAMGLIATSKLRKVRKKLEANNKYCELFSSIVNELAMEAEQNNIYIKGNKSNKKLYIALNSDTGLCGGFNANVVNELNSIRSKEKEDFLLITMGQKGKMYFRRLNYNIESEYIDIPDVPTIKETEDVVYKALELYRNGEIGEINIVFTKFISTIKQNVIVEKLLPLEVKKVEKRNFIVKFEPSADEMIEDIVELHLRQKLLNCIINSKVSEQSSRMTAMDGATKNANDLLDELNLQYNRERQTAITQEITEIVGGAEALK.

The protein belongs to the ATPase gamma chain family. In terms of assembly, F-type ATPases have 2 components, CF(1) - the catalytic core - and CF(0) - the membrane proton channel. CF(1) has five subunits: alpha(3), beta(3), gamma(1), delta(1), epsilon(1). CF(0) has three main subunits: a, b and c.

The protein resides in the cell membrane. In terms of biological role, produces ATP from ADP in the presence of a proton gradient across the membrane. The gamma chain is believed to be important in regulating ATPase activity and the flow of protons through the CF(0) complex. The polypeptide is ATP synthase gamma chain (Clostridium kluyveri (strain NBRC 12016)).